The primary structure comprises 94 residues: Large ribosomal subunit protein bL25 (94 aa).

This sequence belongs to the bacterial ribosomal protein bL25 family. As to quaternary structure, part of the 50S ribosomal subunit; part of the 5S rRNA/L5/L18/L25 subcomplex. Contacts the 5S rRNA. Binds to the 5S rRNA independently of L5 and L18.

In terms of biological role, this is one of the proteins that binds to the 5S RNA in the ribosome where it forms part of the central protuberance. The chain is Large ribosomal subunit protein bL25 from Escherichia coli O157:H7.